Reading from the N-terminus, the 459-residue chain is Elongation factor 1-alpha 4 (459 aa).

Residues 5–242 form the tr-type G domain; it reads KTHINIVVIG…DCIIPPQRPT (238 aa). The tract at residues 14-21 is G1; that stretch reads GHVDSGKS. Positions 70–74 are G2; that stretch reads GITID. Residues 91 to 94 are G3; sequence DAPG. The segment at 153-156 is G4; sequence NKMD. The G5 stretch occupies residues 194-196; the sequence is SGF. 2 positions are modified to 5-glutamyl glycerylphosphorylethanolamine: Glu-301 and Glu-374.

It belongs to the TRAFAC class translation factor GTPase superfamily. Classic translation factor GTPase family. EF-Tu/EF-1A subfamily.

The protein localises to the cytoplasm. In terms of biological role, this protein promotes the GTP-dependent binding of aminoacyl-tRNA to the A-site of ribosomes during protein biosynthesis. This Oscheius tipulae protein is Elongation factor 1-alpha 4 (eft-4).